A 361-amino-acid polypeptide reads, in one-letter code: Cytochrome P450 family protein EryCII (361 aa).

This sequence belongs to the cytochrome P450 family. Heterotetramer composed of EryCII and EryCIII.

It participates in antibiotic biosynthesis; erythromycin biosynthesis. Functionally, involved in the erythromycin biosynthesis pathway. Acts by forming a complex and stabilizing the desosaminyl transferase EryCIII. In Saccharopolyspora erythraea (strain ATCC 11635 / DSM 40517 / JCM 4748 / NBRC 13426 / NCIMB 8594 / NRRL 2338), this protein is Cytochrome P450 family protein EryCII (eryCII).